A 433-amino-acid chain; its full sequence is Putative purine permease YbbY (433 aa).

Over 1 to 17 (MFNFAVSRESLLSGFQW) the chain is Periplasmic. A helical transmembrane segment spans residues 18–38 (FFFIFCNTVVVPPTLLSAFQL). Residues 39-42 (PQSS) lie on the Cytoplasmic side of the membrane. Residues 43–63 (LLTLTQYAFLATALACFAQAF) traverse the membrane as a helical segment. Residues 64 to 68 (CGHRR) are Periplasmic-facing. The helical transmembrane segment at 69 to 89 (AIMEGPGGLWWGTILTITLGE) threads the bilayer. The Cytoplasmic portion of the chain corresponds to 90–102 (ASRGTPINDIATS). The helical transmembrane segment at 103–123 (LAVGIALSGVLTMLIGFSGLG) threads the bilayer. Residues 124 to 130 (HRLARLF) are Periplasmic-facing. The helical transmembrane segment at 131–151 (TPSVMVLFMLMLGAQLTTIFF) threads the bilayer. The Cytoplasmic portion of the chain corresponds to 152 to 169 (KGMLGLPFGIADPNFKIQ). The helical transmembrane segment at 170 to 190 (LPPFALSVAVMCLVLAMIIFL) threads the bilayer. At 191-196 (PQRFAR) the chain is on the periplasmic side. Residues 197–217 (YGLLVGTITGWLLWYFCFPSS) form a helical membrane-spanning segment. Topologically, residues 218-230 (HSLSGELHWQWFP) are cytoplasmic. The chain crosses the membrane as a helical span at residues 231 to 251 (LGSGGALSPGIILTAVITGLV). The Periplasmic portion of the chain corresponds to 252-288 (NISNTYGAIRGTDVFYPQQGAGNTRYRRSFVATGFMT). A helical transmembrane segment spans residues 289-309 (LITVPLAVIPFSPFVSSIGLL). Topologically, residues 310 to 319 (TQTGDYTRRS) are cytoplasmic. Residues 320 to 340 (FIYGSVICLLVALVPALTRLF) form a helical membrane-spanning segment. At 341–345 (CSIPL) the chain is on the periplasmic side. A helical membrane pass occupies residues 346-366 (PVSSAVMLVSYLPLLFSALVF). Over 367–379 (SQQITFTARNIYR) the chain is Cytoplasmic. Residues 380–400 (LALPLFVGIFLMALPPVYLQD) traverse the membrane as a helical segment. Residues 401–407 (LPLTLRP) are Periplasmic-facing. A helical membrane pass occupies residues 408-428 (LLSNGLLVGILLAVLMDNLIP). Residues 429–433 (WERIE) are Cytoplasmic-facing.

Belongs to the nucleobase:cation symporter-2 (NCS2) (TC 2.A.40) family.

It is found in the cell inner membrane. This Escherichia coli (strain K12) protein is Putative purine permease YbbY (ybbY).